Reading from the N-terminus, the 62-residue chain is Potassium channel toxin alpha-KTx Tx308 (62 aa).

A signal peptide spans 1 to 18 (MQKLFIVLLLFCILRLDA). Disulfide bonds link Cys28-Cys46, Cys33-Cys59, and Cys37-Cys61.

Belongs to the short scorpion toxin superfamily. Potassium channel inhibitor family. Alpha-KTx 23 subfamily. As to expression, expressed by the venom gland.

It is found in the secreted. Functionally, may block potassium channels. The protein is Potassium channel toxin alpha-KTx Tx308 of Buthus israelis (Israeli scorpion).